Consider the following 446-residue polypeptide: UDP-N-acetylmuramoylalanine--D-glutamate ligase (446 aa).

Position 115-121 (115-121 (GTNGKTT)) interacts with ATP.

The protein belongs to the MurCDEF family.

It is found in the cytoplasm. The enzyme catalyses UDP-N-acetyl-alpha-D-muramoyl-L-alanine + D-glutamate + ATP = UDP-N-acetyl-alpha-D-muramoyl-L-alanyl-D-glutamate + ADP + phosphate + H(+). It participates in cell wall biogenesis; peptidoglycan biosynthesis. In terms of biological role, cell wall formation. Catalyzes the addition of glutamate to the nucleotide precursor UDP-N-acetylmuramoyl-L-alanine (UMA). The chain is UDP-N-acetylmuramoylalanine--D-glutamate ligase from Trichlorobacter lovleyi (strain ATCC BAA-1151 / DSM 17278 / SZ) (Geobacter lovleyi).